Here is a 266-residue protein sequence, read N- to C-terminus: Putative carbamate hydrolase RutD (266 aa).

This sequence belongs to the AB hydrolase superfamily. Hydrolase RutD family.

The enzyme catalyses carbamate + 2 H(+) = NH4(+) + CO2. Functionally, involved in pyrimidine catabolism. May facilitate the hydrolysis of carbamate, a reaction that can also occur spontaneously. This Escherichia coli O127:H6 (strain E2348/69 / EPEC) protein is Putative carbamate hydrolase RutD.